The primary structure comprises 442 residues: tRNA-2-methylthio-N(6)-dimethylallyladenosine synthase (442 aa).

An MTTase N-terminal domain is found at 2 to 117; the sequence is KSLYIKTYGC…LPELIVKASR (116 aa). [4Fe-4S] cluster contacts are provided by cysteine 11, cysteine 47, cysteine 80, cysteine 157, cysteine 161, and cysteine 164. Residues 143-374 enclose the Radical SAM core domain; the sequence is NSQGSSAFLS…QKLINKQQLE (232 aa). Residues 377–441 enclose the TRAM domain; the sequence is QSMVGKTIPV…QNSLLGRELQ (65 aa).

The protein belongs to the methylthiotransferase family. MiaB subfamily. Monomer. [4Fe-4S] cluster serves as cofactor.

It localises to the cytoplasm. It catalyses the reaction N(6)-dimethylallyladenosine(37) in tRNA + (sulfur carrier)-SH + AH2 + 2 S-adenosyl-L-methionine = 2-methylsulfanyl-N(6)-dimethylallyladenosine(37) in tRNA + (sulfur carrier)-H + 5'-deoxyadenosine + L-methionine + A + S-adenosyl-L-homocysteine + 2 H(+). Catalyzes the methylthiolation of N6-(dimethylallyl)adenosine (i(6)A), leading to the formation of 2-methylthio-N6-(dimethylallyl)adenosine (ms(2)i(6)A) at position 37 in tRNAs that read codons beginning with uridine. The chain is tRNA-2-methylthio-N(6)-dimethylallyladenosine synthase from Wolbachia sp. subsp. Brugia malayi (strain TRS).